Reading from the N-terminus, the 316-residue chain is Alpha- and gamma-adaptin-binding protein p34 (316 aa).

Positions 198–232 (ASAESCHSEQQEPSPTAERTESLPGHHSGACGSAG) are disordered. Positions 222-232 (GHHSGACGSAG) are enriched in low complexity. A phosphoserine mark is found at Ser311 and Ser312.

Associated with AP-1 and AP-2 complexes.

It is found in the cytoplasm. It localises to the cytosol. May be involved in endocytic recycling of growth factor receptors such as EGFR. This Mus musculus (Mouse) protein is Alpha- and gamma-adaptin-binding protein p34 (Aagab).